The primary structure comprises 291 residues: Acetyl-coenzyme A carboxylase carboxyl transferase subunit beta (291 aa).

The 263-residue stretch at 29-291 (IMTKCPDCKK…TGGDLEWLEN (263 aa)) folds into the CoA carboxyltransferase N-terminal domain. Zn(2+)-binding residues include C33, C36, C52, and C55. A C4-type zinc finger spans residues 33–55 (CPDCKKIMLTKELDKNLRVCMNC).

Belongs to the AccD/PCCB family. As to quaternary structure, acetyl-CoA carboxylase is a heterohexamer composed of biotin carboxyl carrier protein (AccB), biotin carboxylase (AccC) and two subunits each of ACCase subunit alpha (AccA) and ACCase subunit beta (AccD). Zn(2+) is required as a cofactor.

The protein resides in the cytoplasm. It carries out the reaction N(6)-carboxybiotinyl-L-lysyl-[protein] + acetyl-CoA = N(6)-biotinyl-L-lysyl-[protein] + malonyl-CoA. The protein operates within lipid metabolism; malonyl-CoA biosynthesis; malonyl-CoA from acetyl-CoA: step 1/1. In terms of biological role, component of the acetyl coenzyme A carboxylase (ACC) complex. Biotin carboxylase (BC) catalyzes the carboxylation of biotin on its carrier protein (BCCP) and then the CO(2) group is transferred by the transcarboxylase to acetyl-CoA to form malonyl-CoA. The polypeptide is Acetyl-coenzyme A carboxylase carboxyl transferase subunit beta (Bacillus licheniformis (strain ATCC 14580 / DSM 13 / JCM 2505 / CCUG 7422 / NBRC 12200 / NCIMB 9375 / NCTC 10341 / NRRL NRS-1264 / Gibson 46)).